The following is a 375-amino-acid chain: POU domain, class 3, transcription factor 1-B (375 aa).

Disordered regions lie at residues 1–29 (MAAT…RMHQ), 56–139 (MSLT…QPLI), and 151–200 (MLGP…PSSD). Composition is skewed to polar residues over residues 107–117 (VHQQTPSSHAW), 129–139 (SPGSNSHQPLI), and 151–160 (MLGPQASSLH). The segment covering 162 to 178 (SMRDPLHDDPGVHDTHV) has biased composition (basic and acidic residues). Residues 194 to 268 (EDAPSSDDLE…LLNKWLEETD (75 aa)) form the POU-specific domain. Residues 286–345 (KRKKRTSIEVGVKGALENHFLKCPKPSAHEITSLADSLQLEKEVVRVWFCNRRQKEKRMT) constitute a DNA-binding region (homeobox).

The protein belongs to the POU transcription factor family. Class-3 subfamily.

It is found in the nucleus. Functionally, acts as a transcription factor. May play a role in neuronal differentiation. In Xenopus laevis (African clawed frog), this protein is POU domain, class 3, transcription factor 1-B (pou3f1-b).